The primary structure comprises 203 residues: MSEILELEAESRTEFGTGAARALRRAGRVPAIIYGAGKTPVSISLEEKEITKYYRKPAFISQLINLTIDKKKYKVLPKAVELHPVTDIVRHVDFVFLEEKTQKMEVPVVYEGKERALGVKRGGYFNIVKRRVTLLCDVNNIPRNVTIDVTNMPMATSLKSSKIELPKGCSFVTNKEFVLATIIGRRGAKTEAEGEQQAAEAGK.

It belongs to the bacterial ribosomal protein bL25 family. CTC subfamily. Part of the 50S ribosomal subunit; part of the 5S rRNA/L5/L18/L25 subcomplex. Contacts the 5S rRNA. Binds to the 5S rRNA independently of L5 and L18.

Functionally, this is one of the proteins that binds to the 5S RNA in the ribosome where it forms part of the central protuberance. In Rickettsia conorii (strain ATCC VR-613 / Malish 7), this protein is Large ribosomal subunit protein bL25.